The primary structure comprises 162 residues: Succinate dehydrogenase assembly factor 2, mitochondrial (162 aa).

The transit peptide at 1–35 (MHNMFPALTKTLSLQGYKIINSQTGSAAWSCGRRW) directs the protein to the mitochondrion.

This sequence belongs to the SDHAF2 family. As to quaternary structure, interacts with the flavoprotein subunit within the SDH catalytic dimer.

The protein resides in the mitochondrion matrix. Its function is as follows. Plays an essential role in the assembly of succinate dehydrogenase (SDH), an enzyme complex (also referred to as respiratory complex II) that is a component of both the tricarboxylic acid (TCA) cycle and the mitochondrial electron transport chain, and which couples the oxidation of succinate to fumarate with the reduction of ubiquinone (coenzyme Q) to ubiquinol. Required for flavinylation (covalent attachment of FAD) of the flavoprotein subunit of the SDH catalytic dimer. The chain is Succinate dehydrogenase assembly factor 2, mitochondrial from Saccharomyces cerevisiae (strain RM11-1a) (Baker's yeast).